A 239-amino-acid polypeptide reads, in one-letter code: tRNA (guanine-N(7)-)-methyltransferase (239 aa).

Positions 1-13 (MEAEVQQGQQSPE) are enriched in polar residues. The interval 1–30 (MEAEVQQGQQSPEGQLEKRPPSPPWAGIPL) is disordered. Asp-72, Glu-97, Asn-124, and Asp-147 together coordinate S-adenosyl-L-methionine. Asp-147 is a catalytic residue. Substrate is bound by residues Lys-151 and Asp-183.

Belongs to the class I-like SAM-binding methyltransferase superfamily. TrmB family.

The enzyme catalyses guanosine(46) in tRNA + S-adenosyl-L-methionine = N(7)-methylguanosine(46) in tRNA + S-adenosyl-L-homocysteine. The protein operates within tRNA modification; N(7)-methylguanine-tRNA biosynthesis. In terms of biological role, catalyzes the formation of N(7)-methylguanine at position 46 (m7G46) in tRNA. The protein is tRNA (guanine-N(7)-)-methyltransferase of Synechococcus sp. (strain JA-2-3B'a(2-13)) (Cyanobacteria bacterium Yellowstone B-Prime).